Consider the following 78-residue polypeptide: Surfactant-associated protein 2 (78 aa).

The signal sequence occupies residues 1–19; the sequence is MGSGLPLVLLLTLLGSSHG. N-linked (GlcNAc...) asparagine glycosylation occurs at N37.

In terms of processing, N-glycosylated. In terms of tissue distribution, predominantly expressed in lung, where it is detected in type II pneumocytes in the alveolus, and in nonciliated epithelium in bronchioli (at protein level). Also detected at lower levels in cervix, esophagus, stomach, testis and kidney.

Its subcellular location is the secreted. The protein resides in the cytoplasmic vesicle. It localises to the secretory vesicle. It is found in the golgi apparatus. In terms of biological role, putative surfactant protein. The chain is Surfactant-associated protein 2 (SFTA2) from Homo sapiens (Human).